The primary structure comprises 372 residues: Queuine tRNA-ribosyltransferase (372 aa).

Catalysis depends on aspartate 89, which acts as the Proton acceptor. Substrate-binding positions include 89–93 (DSGGF), aspartate 143, glutamine 185, and glycine 212. Positions 243–249 (GVGKPED) are RNA binding. The active-site Nucleophile is aspartate 262. The tract at residues 267-271 (TRNAR) is RNA binding; important for wobble base 34 recognition. 4 residues coordinate Zn(2+): cysteine 300, cysteine 302, cysteine 305, and histidine 331.

This sequence belongs to the queuine tRNA-ribosyltransferase family. In terms of assembly, homodimer. Within each dimer, one monomer is responsible for RNA recognition and catalysis, while the other monomer binds to the replacement base PreQ1. Requires Zn(2+) as cofactor.

It carries out the reaction 7-aminomethyl-7-carbaguanine + guanosine(34) in tRNA = 7-aminomethyl-7-carbaguanosine(34) in tRNA + guanine. The protein operates within tRNA modification; tRNA-queuosine biosynthesis. Functionally, catalyzes the base-exchange of a guanine (G) residue with the queuine precursor 7-aminomethyl-7-deazaguanine (PreQ1) at position 34 (anticodon wobble position) in tRNAs with GU(N) anticodons (tRNA-Asp, -Asn, -His and -Tyr). Catalysis occurs through a double-displacement mechanism. The nucleophile active site attacks the C1' of nucleotide 34 to detach the guanine base from the RNA, forming a covalent enzyme-RNA intermediate. The proton acceptor active site deprotonates the incoming PreQ1, allowing a nucleophilic attack on the C1' of the ribose to form the product. After dissociation, two additional enzymatic reactions on the tRNA convert PreQ1 to queuine (Q), resulting in the hypermodified nucleoside queuosine (7-(((4,5-cis-dihydroxy-2-cyclopenten-1-yl)amino)methyl)-7-deazaguanosine). The protein is Queuine tRNA-ribosyltransferase of Pseudomonas aeruginosa (strain LESB58).